The following is a 421-amino-acid chain: Serine--tRNA ligase (421 aa).

Residue 225 to 227 (TAE) participates in L-serine binding. Residues 256-258 (RSE) and V272 contribute to the ATP site. Position 279 (E279) interacts with L-serine. ATP is bound at residue 345 to 348 (ETHS). An L-serine-binding site is contributed by T380.

The protein belongs to the class-II aminoacyl-tRNA synthetase family. Type-1 seryl-tRNA synthetase subfamily. As to quaternary structure, homodimer. A single tRNA molecule binds across the dimer.

The protein localises to the cytoplasm. The enzyme catalyses tRNA(Ser) + L-serine + ATP = L-seryl-tRNA(Ser) + AMP + diphosphate + H(+). It catalyses the reaction tRNA(Sec) + L-serine + ATP = L-seryl-tRNA(Sec) + AMP + diphosphate + H(+). It functions in the pathway aminoacyl-tRNA biosynthesis; selenocysteinyl-tRNA(Sec) biosynthesis; L-seryl-tRNA(Sec) from L-serine and tRNA(Sec): step 1/1. In terms of biological role, catalyzes the attachment of serine to tRNA(Ser). Is also probably able to aminoacylate tRNA(Sec) with serine, to form the misacylated tRNA L-seryl-tRNA(Sec), which will be further converted into selenocysteinyl-tRNA(Sec). This is Serine--tRNA ligase (serS) from Thermus thermophilus (strain ATCC BAA-163 / DSM 7039 / HB27).